The primary structure comprises 121 residues: MAQRTPRELRLRRHRRVRKKVSGTPQRPRLCVFRSNMHIYAQVIDDTVGRTLAAASTVEPELRASLAGKTKTERAKVVGAAIAERARAVGIECVVFDRGGFKYHGRIQALADAAREGGLKF.

Belongs to the universal ribosomal protein uL18 family. As to quaternary structure, part of the 50S ribosomal subunit; part of the 5S rRNA/L5/L18/L25 subcomplex. Contacts the 5S and 23S rRNAs.

This is one of the proteins that bind and probably mediate the attachment of the 5S RNA into the large ribosomal subunit, where it forms part of the central protuberance. The sequence is that of Large ribosomal subunit protein uL18 from Roseiflexus castenholzii (strain DSM 13941 / HLO8).